The sequence spans 86 residues: Small ribosomal subunit protein bS20 (86 aa).

The tract at residues 1–25 is disordered; the sequence is MANIKSQQKRNKTNERARLRNKSVK.

The protein belongs to the bacterial ribosomal protein bS20 family.

Functionally, binds directly to 16S ribosomal RNA. The chain is Small ribosomal subunit protein bS20 from Mycobacterium avium (strain 104).